The sequence spans 872 residues: DNA mismatch repair protein MutS (872 aa).

Over residues 1–17 the composition is skewed to polar residues; that stretch reads MSISKIESVNAEKQSPV. The tract at residues 1-22 is disordered; that stretch reads MSISKIESVNAEKQSPVGTEIG. 632 to 639 lines the ATP pocket; it reads GPNMGGKS.

Belongs to the DNA mismatch repair MutS family.

In terms of biological role, this protein is involved in the repair of mismatches in DNA. It is possible that it carries out the mismatch recognition step. This protein has a weak ATPase activity. The polypeptide is DNA mismatch repair protein MutS (Azoarcus sp. (strain BH72)).